The primary structure comprises 389 residues: Sinapine esterase (389 aa).

The signal sequence occupies residues 1–25; it reads MASSLKKLITSFLLFFFYTIIVASS. S41 (nucleophile) is an active-site residue. N-linked (GlcNAc...) asparagine glycans are attached at residues N104, N137, and N320. Residues D345 and H348 contribute to the active site. Residues N372 and N383 are each glycosylated (N-linked (GlcNAc...) asparagine).

The protein belongs to the 'GDSL' lipolytic enzyme family. Expressed in most tissues or organs of the mature seedlings. Not expressed in roots of mature seedlings.

It localises to the secreted. It carries out the reaction O-sinapoylcholine + H2O = (E)-sinapate + choline + H(+). With respect to regulation, inhibited by PMSF. Functionally, sinapine esterase that catalyzes that hydrolysis of sinapine, releasing choline and sinapate. Sinapine (O-sinapoylcholine) is the predominant phenolic compound in a complex group of sinapate esters in seeds of oilseed rape (B.napus). Sinapine has antinutritive activity and prevents the use of seed protein for food and feed. Shows broad substrate specificity towards various other choline esters, including phosphatidylcholine. In Brassica napus (Rape), this protein is Sinapine esterase.